Reading from the N-terminus, the 263-residue chain is Palmitoyltransferase ZDHHC22 (263 aa).

The Cytoplasmic segment spans residues 1–9 (MLALRLLNV). The helical transmembrane segment at 10–30 (VAPAYFLCISLVTFVLQLFLF) threads the bilayer. Over 31–47 (LPSMREDPTATPLFSPA) the chain is Lumenal. A helical transmembrane segment spans residues 48–68 (VLHGALFLFLSANALGNYILV). Topologically, residues 69-125 (VQNSPDDLGACQGTSSQRPQRPPPSTHFCRVCARVTLRHDHHCFFTGNCIGSRNMRN) are cytoplasmic. In terms of domain architecture, DHHC spans 91-131 (PPSTHFCRVCARVTLRHDHHCFFTGNCIGSRNMRNFILFCL). Cys111 functions as the S-palmitoyl cysteine intermediate in the catalytic mechanism. Helical transmembrane passes span 126–146 (FILF…AGVA) and 147–167 (YISA…TLLP). At 168–182 (TSISQFFSGAVLGSD) the chain is on the cytoplasmic side. Residues 183–203 (MFVILMLYLWFAVGLACAGFC) form a helical membrane-spanning segment. The Lumenal portion of the chain corresponds to 204–263 (CHQLLLILRGQTRYQVRKGVAVRARPWRKNLQEVFGKRWLLGLLVPMFNVGTESSKQQDK).

Belongs to the DHHC palmitoyltransferase family. In terms of assembly, interacts with CNN3.

It is found in the endoplasmic reticulum membrane. Its subcellular location is the golgi apparatus membrane. It carries out the reaction L-cysteinyl-[protein] + hexadecanoyl-CoA = S-hexadecanoyl-L-cysteinyl-[protein] + CoA. Palmitoyltransferase that could catalyze the addition of palmitate onto various protein substrates and be involved in a variety of cellular processes. Catalyzes the palmitoylation of KCNMA1, regulating localization of KCNMA1 to the plasma membrane. Might also mediate palmitoylation of CNN3. This Rattus norvegicus (Rat) protein is Palmitoyltransferase ZDHHC22.